A 195-amino-acid polypeptide reads, in one-letter code: UPF0215 protein TSIB_1161 (195 aa).

Belongs to the UPF0215 family.

The polypeptide is UPF0215 protein TSIB_1161 (Thermococcus sibiricus (strain DSM 12597 / MM 739)).